Reading from the N-terminus, the 479-residue chain is Adenosylhomocysteinase (479 aa).

Residues Thr65, Asp145, and Glu205 each contribute to the substrate site. An NAD(+)-binding site is contributed by 206-208; that stretch reads TTT. Substrate is bound by residues Lys235 and Asp239. Residues Asn240, 269–274, Glu292, Asn327, 348–350, and Asn393 contribute to the NAD(+) site; these read GYGDVG and IGH.

This sequence belongs to the adenosylhomocysteinase family. NAD(+) is required as a cofactor.

Its subcellular location is the cytoplasm. It catalyses the reaction S-adenosyl-L-homocysteine + H2O = L-homocysteine + adenosine. Its pathway is amino-acid biosynthesis; L-homocysteine biosynthesis; L-homocysteine from S-adenosyl-L-homocysteine: step 1/1. Its function is as follows. May play a key role in the regulation of the intracellular concentration of adenosylhomocysteine. This Herminiimonas arsenicoxydans protein is Adenosylhomocysteinase.